The chain runs to 353 residues: Protein-arginine kinase (353 aa).

Positions 24 to 256 (IVLSSRIRLA…RTVIDTEEQA (233 aa)) constitute a Phosphagen kinase C-terminal domain. Residues 27–31 (SSRIR), His-93, Arg-127, 178–182 (RASVM), and 209–214 (RGLYGE) contribute to the ATP site. Positions 339–344 (RDVRRA) match the RDXXRA motif of the pArg binding pocket involved in allosteric regulation motif.

It belongs to the ATP:guanido phosphotransferase family.

It carries out the reaction L-arginyl-[protein] + ATP = N(omega)-phospho-L-arginyl-[protein] + ADP + H(+). Appears to be allosterically activated by the binding of pArg-containing polypeptides to the pArg-binding pocket localized in the C-terminal domain of McsB. Catalyzes the specific phosphorylation of arginine residues in proteins. The polypeptide is Protein-arginine kinase (Symbiobacterium thermophilum (strain DSM 24528 / JCM 14929 / IAM 14863 / T)).